The primary structure comprises 519 residues: Probable cytosol aminopeptidase (519 aa).

Mn(2+)-binding residues include lysine 251 and aspartate 256. Lysine 263 is an active-site residue. Aspartate 274, aspartate 333, and glutamate 335 together coordinate Mn(2+). The active site involves arginine 337. A compositionally biased stretch (low complexity) spans valine 487 to proline 502. Residues valine 487–proline 519 form a disordered region.

Belongs to the peptidase M17 family. The cofactor is Mn(2+).

The protein localises to the cytoplasm. The catalysed reaction is Release of an N-terminal amino acid, Xaa-|-Yaa-, in which Xaa is preferably Leu, but may be other amino acids including Pro although not Arg or Lys, and Yaa may be Pro. Amino acid amides and methyl esters are also readily hydrolyzed, but rates on arylamides are exceedingly low.. It catalyses the reaction Release of an N-terminal amino acid, preferentially leucine, but not glutamic or aspartic acids.. Its function is as follows. Presumably involved in the processing and regular turnover of intracellular proteins. Catalyzes the removal of unsubstituted N-terminal amino acids from various peptides. This chain is Probable cytosol aminopeptidase, found in Verminephrobacter eiseniae (strain EF01-2).